The chain runs to 182 residues: UPF0690 protein C1orf52 homolog (182 aa).

Residues 1-61 are disordered; that stretch reads MAAEEKDPLS…AEKRLPGPDE (61 aa). The span at 23–32 shows a compositional bias: acidic residues; it reads SDEEDNSEPE. Residues 51-61 are compositionally biased toward basic and acidic residues; the sequence is KAEKRLPGPDE. The residue at position 67 (T67) is a Phosphothreonine. A Phosphotyrosine modification is found at Y132. The tract at residues 132–182 is disordered; the sequence is YEDNGDDAPQNAKKARLLPEGEETVESDDEKDEHTSKKRKIELGEPTKKKK. A compositionally biased stretch (acidic residues) spans 151–162; sequence EGEETVESDDEK. S158 is subject to Phosphoserine. Basic and acidic residues predominate over residues 172–182; the sequence is IELGEPTKKKK.

Belongs to the UPF0690 family.

This chain is UPF0690 protein C1orf52 homolog, found in Bos taurus (Bovine).